Consider the following 283-residue polypeptide: Putative 4-diphosphocytidyl-2-C-methyl-D-erythritol kinase (283 aa).

The active site involves Lys-11. Residue 95-105 participates in ATP binding; sequence PVCAGMGGGSS. The active site involves Asp-137.

This sequence belongs to the GHMP kinase family. IspE subfamily.

The enzyme catalyses 4-CDP-2-C-methyl-D-erythritol + ATP = 4-CDP-2-C-methyl-D-erythritol 2-phosphate + ADP + H(+). In terms of biological role, catalyzes the phosphorylation of the position 2 hydroxy group of 4-diphosphocytidyl-2C-methyl-D-erythritol. In Streptococcus equi subsp. equi (strain 4047), this protein is Putative 4-diphosphocytidyl-2-C-methyl-D-erythritol kinase.